A 286-amino-acid chain; its full sequence is MGTKLGVPNLWEILNKKKIKATFFFTVGPDNMGRHFWRLIKPKFLFKMFRINPFKIYGLNILRSGFIGKGKNIGKICKNEIKSASKDHEIGLHAWDHFSWQTWINMFSKKKIIKHINLGKNALQHIIKYPVTCFASPGWRTNEYVLRTLKNNFNFSYNSDCRGSNLFFPYLGDGKIGSLQIPVTLPTFDEVINIKTTIKKYNSFIIKLIKTQLNFSVYTIHAEIEGMKYKKEFEEFLNIAINEGINFCRLKDLIPKEIENIPIYKINHKTIPGRDGWIAYQQKIIK.

In terms of domain architecture, NodB homology spans 1–248; it reads MGTKLGVPNL…IAINEGINFC (248 aa).

This sequence belongs to the polysaccharide deacetylase family. ArnD deformylase subfamily.

The enzyme catalyses 4-deoxy-4-formamido-alpha-L-arabinopyranosyl di-trans,octa-cis-undecaprenyl phosphate + H2O = 4-amino-4-deoxy-alpha-L-arabinopyranosyl di-trans,octa-cis-undecaprenyl phosphate + formate. The protein operates within glycolipid biosynthesis; 4-amino-4-deoxy-alpha-L-arabinose undecaprenyl phosphate biosynthesis; 4-amino-4-deoxy-alpha-L-arabinose undecaprenyl phosphate from UDP-4-deoxy-4-formamido-beta-L-arabinose and undecaprenyl phosphate: step 2/2. It participates in bacterial outer membrane biogenesis; lipopolysaccharide biosynthesis. Functionally, catalyzes the deformylation of 4-deoxy-4-formamido-L-arabinose-phosphoundecaprenol to 4-amino-4-deoxy-L-arabinose-phosphoundecaprenol. The modified arabinose is attached to lipid A and is required for resistance to polymyxin and cationic antimicrobial peptides. This chain is Probable 4-deoxy-4-formamido-L-arabinose-phosphoundecaprenol deformylase ArnD, found in Wigglesworthia glossinidia brevipalpis.